The chain runs to 253 residues: tRNA (guanine-N(7)-)-methyltransferase (253 aa).

The span at 1-12 (MSQTPMPQPDQA) shows a compositional bias: pro residues. The disordered stretch occupies residues 1-39 (MSQTPMPQPDQAPPVDVGQPVDEAEAKRRRFKTHGRKKG). Over residues 27 to 39 (KRRRFKTHGRKKG) the composition is skewed to basic residues. Glu-84, Asp-109, Asn-136, and Asp-159 together coordinate S-adenosyl-L-methionine. Asp-159 is a catalytic residue. Substrate is bound by residues Lys-163, Asp-195, and 232–235 (TNFE).

It belongs to the class I-like SAM-binding methyltransferase superfamily. TrmB family.

It catalyses the reaction guanosine(46) in tRNA + S-adenosyl-L-methionine = N(7)-methylguanosine(46) in tRNA + S-adenosyl-L-homocysteine. The protein operates within tRNA modification; N(7)-methylguanine-tRNA biosynthesis. Functionally, catalyzes the formation of N(7)-methylguanine at position 46 (m7G46) in tRNA. This is tRNA (guanine-N(7)-)-methyltransferase from Magnetococcus marinus (strain ATCC BAA-1437 / JCM 17883 / MC-1).